A 160-amino-acid polypeptide reads, in one-letter code: SsrA-binding protein (160 aa).

It belongs to the SmpB family.

Its subcellular location is the cytoplasm. Required for rescue of stalled ribosomes mediated by trans-translation. Binds to transfer-messenger RNA (tmRNA), required for stable association of tmRNA with ribosomes. tmRNA and SmpB together mimic tRNA shape, replacing the anticodon stem-loop with SmpB. tmRNA is encoded by the ssrA gene; the 2 termini fold to resemble tRNA(Ala) and it encodes a 'tag peptide', a short internal open reading frame. During trans-translation Ala-aminoacylated tmRNA acts like a tRNA, entering the A-site of stalled ribosomes, displacing the stalled mRNA. The ribosome then switches to translate the ORF on the tmRNA; the nascent peptide is terminated with the 'tag peptide' encoded by the tmRNA and targeted for degradation. The ribosome is freed to recommence translation, which seems to be the essential function of trans-translation. This is SsrA-binding protein from Pasteurella multocida (strain Pm70).